Reading from the N-terminus, the 345-residue chain is Biotin synthase (345 aa).

The 229-residue stretch at 67–295 (YKVQLASLLS…KSRIRLSAGR (229 aa)) folds into the Radical SAM core domain. Residues cysteine 82, cysteine 86, and cysteine 89 each contribute to the [4Fe-4S] cluster site. Residues cysteine 126, cysteine 158, cysteine 218, and arginine 290 each coordinate [2Fe-2S] cluster.

This sequence belongs to the radical SAM superfamily. Biotin synthase family. As to quaternary structure, homodimer. The cofactor is [4Fe-4S] cluster. [2Fe-2S] cluster is required as a cofactor.

It catalyses the reaction (4R,5S)-dethiobiotin + (sulfur carrier)-SH + 2 reduced [2Fe-2S]-[ferredoxin] + 2 S-adenosyl-L-methionine = (sulfur carrier)-H + biotin + 2 5'-deoxyadenosine + 2 L-methionine + 2 oxidized [2Fe-2S]-[ferredoxin]. It participates in cofactor biosynthesis; biotin biosynthesis; biotin from 7,8-diaminononanoate: step 2/2. Catalyzes the conversion of dethiobiotin (DTB) to biotin by the insertion of a sulfur atom into dethiobiotin via a radical-based mechanism. The sequence is that of Biotin synthase from Prochlorococcus marinus (strain NATL2A).